The following is a 234-amino-acid chain: Zinc finger FYVE domain-containing protein 21 (234 aa).

The FYVE-type zinc finger occupies 44–104 (DKECPRCMQC…QCADCALVSH (61 aa)). C50, C53, C66, C69, C74, C77, C96, and C99 together coordinate Zn(2+). Residues 107 to 234 (AEFYDKQLKV…TKLLYESRDQ (128 aa)) are PH-like.

In terms of assembly, interacts with PTK2/FAK1.

The protein resides in the cell junction. It is found in the focal adhesion. It localises to the cytoplasmic vesicle. Its subcellular location is the endosome. Plays a role in cell adhesion, and thereby in cell motility which requires repeated formation and disassembly of focal adhesions. Regulates microtubule-induced PTK2/FAK1 dephosphorylation, an event important for focal adhesion disassembly, as well as integrin beta-1/ITGB1 cell surface expression. In Rattus norvegicus (Rat), this protein is Zinc finger FYVE domain-containing protein 21 (Zfyve21).